The primary structure comprises 394 residues: Flap endonuclease 1-A (394 aa).

The interval 1-105 (MGIKGLTGLL…GVLSKRLERR (105 aa)) is N-domain. Mg(2+) is bound at residue D34. R47 and R71 together coordinate DNA. The Mg(2+) site is built by D87, E159, E161, D180, and D182. The I-domain stretch occupies residues 123-254 (DVDRFSRRTV…KSALKLIREY (132 aa)). Position 159 (E159) interacts with DNA. 2 residues coordinate DNA: G232 and D234. D234 is a binding site for Mg(2+). The tract at residues 341 to 349 (QQGRLDGFF) is interaction with PCNA. Residues 356–375 (KAAAPAPVGKAKGKGKVDAK) are disordered.

This sequence belongs to the XPG/RAD2 endonuclease family. FEN1 subfamily. As to quaternary structure, interacts with PCNA. Three molecules of FEN1 bind to one PCNA trimer with each molecule binding to one PCNA monomer. PCNA stimulates the nuclease activity without altering cleavage specificity. Mg(2+) serves as cofactor. In terms of processing, phosphorylated. Phosphorylation upon DNA damage induces relocalization to the nuclear plasma.

The protein resides in the nucleus. The protein localises to the nucleolus. Its subcellular location is the nucleoplasm. It localises to the mitochondrion. Functionally, structure-specific nuclease with 5'-flap endonuclease and 5'-3' exonuclease activities involved in DNA replication and repair. During DNA replication, cleaves the 5'-overhanging flap structure that is generated by displacement synthesis when DNA polymerase encounters the 5'-end of a downstream Okazaki fragment. It enters the flap from the 5'-end and then tracks to cleave the flap base, leaving a nick for ligation. Also involved in the long patch base excision repair (LP-BER) pathway, by cleaving within the apurinic/apyrimidinic (AP) site-terminated flap. Acts as a genome stabilization factor that prevents flaps from equilibrating into structures that lead to duplications and deletions. Also possesses 5'-3' exonuclease activity on nicked or gapped double-stranded DNA, and exhibits RNase H activity. Also involved in replication and repair of rDNA and in repairing mitochondrial DNA. The chain is Flap endonuclease 1-A from Laccaria bicolor (strain S238N-H82 / ATCC MYA-4686) (Bicoloured deceiver).